Consider the following 104-residue polypeptide: Large ribosomal subunit protein uL24 (104 aa).

It belongs to the universal ribosomal protein uL24 family. As to quaternary structure, part of the 50S ribosomal subunit.

Functionally, one of two assembly initiator proteins, it binds directly to the 5'-end of the 23S rRNA, where it nucleates assembly of the 50S subunit. In terms of biological role, one of the proteins that surrounds the polypeptide exit tunnel on the outside of the subunit. In Corynebacterium diphtheriae (strain ATCC 700971 / NCTC 13129 / Biotype gravis), this protein is Large ribosomal subunit protein uL24.